We begin with the raw amino-acid sequence, 103 residues long: Large ribosomal subunit protein uL24 (103 aa).

The protein belongs to the universal ribosomal protein uL24 family. As to quaternary structure, part of the 50S ribosomal subunit.

In terms of biological role, one of two assembly initiator proteins, it binds directly to the 5'-end of the 23S rRNA, where it nucleates assembly of the 50S subunit. Functionally, one of the proteins that surrounds the polypeptide exit tunnel on the outside of the subunit. The polypeptide is Large ribosomal subunit protein uL24 (Ruegeria pomeroyi (strain ATCC 700808 / DSM 15171 / DSS-3) (Silicibacter pomeroyi)).